A 404-amino-acid chain; its full sequence is Chorismate synthase (404 aa).

NADP(+) is bound by residues Arg40 and Arg46. Residues 136-138, 257-258, Gly301, 316-320, and Arg342 each bind FMN; these read RAS, QA, and KPIST.

This sequence belongs to the chorismate synthase family. As to quaternary structure, homotetramer. The cofactor is FMNH2.

The enzyme catalyses 5-O-(1-carboxyvinyl)-3-phosphoshikimate = chorismate + phosphate. It functions in the pathway metabolic intermediate biosynthesis; chorismate biosynthesis; chorismate from D-erythrose 4-phosphate and phosphoenolpyruvate: step 7/7. Its function is as follows. Catalyzes the anti-1,4-elimination of the C-3 phosphate and the C-6 proR hydrogen from 5-enolpyruvylshikimate-3-phosphate (EPSP) to yield chorismate, which is the branch point compound that serves as the starting substrate for the three terminal pathways of aromatic amino acid biosynthesis. This reaction introduces a second double bond into the aromatic ring system. The sequence is that of Chorismate synthase from Mycolicibacterium vanbaalenii (strain DSM 7251 / JCM 13017 / BCRC 16820 / KCTC 9966 / NRRL B-24157 / PYR-1) (Mycobacterium vanbaalenii).